The primary structure comprises 123 residues: Small ribosomal subunit protein bS16 (123 aa).

Residues 87–123 form a disordered region; the sequence is AKNNPIKAKPGKRAQERAAEKAQKAADAAAAAADAAE. Positions 99–110 are enriched in basic and acidic residues; it reads RAQERAAEKAQK. A compositionally biased stretch (low complexity) spans 111-123; sequence AADAAAAAADAAE.

It belongs to the bacterial ribosomal protein bS16 family.

In Rhizobium etli (strain CIAT 652), this protein is Small ribosomal subunit protein bS16.